A 324-amino-acid chain; its full sequence is Beta-ketoacyl-[acyl-carrier-protein] synthase III (324 aa).

Residue cysteine 112 is part of the active site. The interval 181–202 (TDGSRGQNLTSGNNPLRSPFSD) is disordered. A compositionally biased stretch (polar residues) spans 184–196 (SRGQNLTSGNNPL). Histidine 249 is a catalytic residue. The tract at residues 250 to 254 (QANRR) is ACP-binding. Asparagine 279 is an active-site residue.

The protein belongs to the thiolase-like superfamily. FabH family. As to quaternary structure, homodimer.

Its subcellular location is the cytoplasm. The enzyme catalyses malonyl-[ACP] + acetyl-CoA + H(+) = 3-oxobutanoyl-[ACP] + CO2 + CoA. It functions in the pathway lipid metabolism; fatty acid biosynthesis. Its function is as follows. Catalyzes the condensation reaction of fatty acid synthesis by the addition to an acyl acceptor of two carbons from malonyl-ACP. Catalyzes the first condensation reaction which initiates fatty acid synthesis and may therefore play a role in governing the total rate of fatty acid production. Possesses both acetoacetyl-ACP synthase and acetyl transacylase activities. Its substrate specificity determines the biosynthesis of branched-chain and/or straight-chain of fatty acids. In Streptococcus uberis (strain ATCC BAA-854 / 0140J), this protein is Beta-ketoacyl-[acyl-carrier-protein] synthase III.